The chain runs to 219 residues: Elongation factor Ts, chloroplastic (219 aa).

This sequence belongs to the EF-Ts family.

It localises to the plastid. The protein resides in the chloroplast. Functionally, associates with the EF-Tu.GDP complex and induces the exchange of GDP to GTP. It remains bound to the aminoacyl-tRNA.EF-Tu.GTP complex up to the GTP hydrolysis stage on the ribosome. The protein is Elongation factor Ts, chloroplastic (tsf) of Guillardia theta (Cryptophyte).